The following is a 393-amino-acid chain: MTVPTTRKDLMIVNMGPQHPSMHGVLRLIVTLDGEDVIDCEPILGYLHRGMEKIAENRTIIQYLPYVTRWDYLATMFTEAITVNAPEQLGNIQVPKRASYIRVIMLELSRIASHLLWLGPFMADIGAQTPFFYIFRERELIYDLFEAATGMRMMHNYFRIGGVAADLPHGWIDKCLDFCDYFVTGVTEYQKLITRNPIFLERVEGVGFISGEEAINWGLSGPMLRASGIQWDLRKVDHYECYDEFDWEVQWQKEGDSLARYLVRINEMTESIKIIQQALERIPGGPYENLEVRRFDRTRDSEWNDFDYRFISKKPSPTFELSKQELYVRVEAPKGELGIFLIGDQSVFPWRWKIRPPGFINLQILPQLVKRMKLADIMTILGSIDIIMGEVDR.

This sequence belongs to the complex I 49 kDa subunit family. NDH is composed of at least 16 different subunits, 5 of which are encoded in the nucleus.

The protein resides in the plastid. It localises to the chloroplast thylakoid membrane. The enzyme catalyses a plastoquinone + NADH + (n+1) H(+)(in) = a plastoquinol + NAD(+) + n H(+)(out). It catalyses the reaction a plastoquinone + NADPH + (n+1) H(+)(in) = a plastoquinol + NADP(+) + n H(+)(out). In terms of biological role, NDH shuttles electrons from NAD(P)H:plastoquinone, via FMN and iron-sulfur (Fe-S) centers, to quinones in the photosynthetic chain and possibly in a chloroplast respiratory chain. The immediate electron acceptor for the enzyme in this species is believed to be plastoquinone. Couples the redox reaction to proton translocation, and thus conserves the redox energy in a proton gradient. The polypeptide is NAD(P)H-quinone oxidoreductase subunit H, chloroplastic (Nandina domestica (Heavenly bamboo)).